We begin with the raw amino-acid sequence, 210 residues long: Imidazoleglycerol-phosphate dehydratase (210 aa).

The interval 1-23 (MNDSLLSNGHAPPLRQATVDRQT) is disordered.

The protein belongs to the imidazoleglycerol-phosphate dehydratase family.

The protein resides in the cytoplasm. It carries out the reaction D-erythro-1-(imidazol-4-yl)glycerol 3-phosphate = 3-(imidazol-4-yl)-2-oxopropyl phosphate + H2O. The protein operates within amino-acid biosynthesis; L-histidine biosynthesis; L-histidine from 5-phospho-alpha-D-ribose 1-diphosphate: step 6/9. This is Imidazoleglycerol-phosphate dehydratase from Thermosynechococcus vestitus (strain NIES-2133 / IAM M-273 / BP-1).